A 380-amino-acid chain; its full sequence is Endonuclease III homolog 2 (380 aa).

The Nuclear localization signal motif lies at 8 to 12; that stretch reads RKRKH. Positions 15-40 are interaction with MLH1; that stretch reads VDIEEVEVRSKYFKKNERTVELVKEN. Lys-194 participates in a covalent cross-link: Glycyl lysine isopeptide (Lys-Gly) (interchain with G-Cter in SUMO). In terms of domain architecture, HhH spans 228 to 252; that stretch reads FDSDIPYDIEGILSLPGVGPKMGYL. The active-site Nucleophile; for N-glycosylase activity is Lys-248. [4Fe-4S] cluster contacts are provided by Cys-319, Cys-326, Cys-329, and Cys-335. The Nuclear localization signal motif lies at 376–380; the sequence is RHKKK.

Belongs to the Nth/MutY family. As to quaternary structure, interacts with MLH1. [4Fe-4S] cluster is required as a cofactor. Monosumoylated.

Its subcellular location is the nucleus. The catalysed reaction is 2'-deoxyribonucleotide-(2'-deoxyribose 5'-phosphate)-2'-deoxyribonucleotide-DNA = a 3'-end 2'-deoxyribonucleotide-(2,3-dehydro-2,3-deoxyribose 5'-phosphate)-DNA + a 5'-end 5'-phospho-2'-deoxyribonucleoside-DNA + H(+). In terms of biological role, bifunctional DNA N-glycosylase with associated apurinic/apyrimidinic (AP) lyase function that catalyzes the first step in base excision repair (BER), the primary repair pathway for the repair of oxidative DNA damage. The DNA N-glycosylase activity releases the damaged DNA base from DNA by cleaving the N-glycosidic bond, leaving an AP site. The AP-lyase activity cleaves the phosphodiester bond 3' to the AP site by a beta-elimination. Primarily recognizes and repairs oxidative base damage of pyrimidines, but also purine-derived lesions, alkylation damage as well as abasic sites. Can also repair the oxidation products of 8-oxoguanine. The protein is Endonuclease III homolog 2 (NTG2) of Saccharomyces cerevisiae (strain ATCC 204508 / S288c) (Baker's yeast).